Consider the following 629-residue polypeptide: Long-chain-fatty-acid--AMP ligase FadD32 (629 aa).

ATP-binding positions include 186 to 191, serine 341, alanine 345, aspartate 468, and arginine 482; that span reads TSGSTR.

The protein belongs to the ATP-dependent AMP-binding enzyme family. As to quaternary structure, monomer.

It carries out the reaction a long-chain fatty acid + holo-[ACP] + ATP = a long-chain fatty acyl-[ACP] + AMP + diphosphate. The enzyme catalyses dodecanoate + ATP + H(+) = dodecanoyl-AMP + diphosphate. The catalysed reaction is tetradecanoate + ATP + H(+) = tetradecanoyl-AMP + diphosphate. Its pathway is lipid metabolism; mycolic acid biosynthesis. With respect to regulation, the acyl-AMP ligase activity is inhibited by the alkylphosphate esters of AMP, adenosine 50-dodecylphosphate (AMPC12) and eicosyl-AMP (AMPC20). In terms of biological role, involved in the biosynthesis of mycolic acids. Catalyzes the activation of long-chain fatty acids as acyl-adenylates (acyl-AMP), which are then transferred to the phosphopantetheine arm of the polyketide synthase Pks13 for further chain extension. Can use dodecanoate (C12) and tetradecanoate (C14). This is Long-chain-fatty-acid--AMP ligase FadD32 (fadD32) from Mycobacterium marinum (strain ATCC BAA-535 / M).